Reading from the N-terminus, the 181-residue chain is Akirin-2 (181 aa).

Positions 18–48 (SPAASPKRRRCAPLSPSGPSPQKYLRLEPSP) are disordered. The Nuclear localization signal signature appears at 23–28 (PKRRRC). The SYVS motif signature appears at 178–181 (SYVS).

Belongs to the akirin family. As to quaternary structure, homodimer. Interacts with actl6a/baf53a. Interacts with gmnn.

It localises to the nucleus. Molecular adapter that acts as a bridge between a variety of multiprotein complexes, and which is involved in embryonic development, immunity, myogenesis and brain development. Plays a key role in nuclear protein degradation by promoting import of proteasomes into the nucleus: acts by bridging fully assembled 20S proteasomes with nuclear import receptor ipo9. Involved in both neural precursor maintenance and terminal neural differentiation: bridges gmnn and actl6a/baf53a in neural progenitor cells, antagonizing the activity of gmnn, thereby suppressing sox2 expression. Also required for proper activation of neurod1 and neuronal differentiation. Involved in myogenesis: required for skeletal muscle formation and skeletal development, possibly by regulating expression of muscle differentiation factors. This is Akirin-2 from Xenopus laevis (African clawed frog).